The following is a 333-amino-acid chain: Aquaporin-1 (333 aa).

The interval 1 to 26 (MQKMSEKPLYRAAENPTRNADRRAGR) is disordered. A run of 2 helical transmembrane segments spans residues 85-105 (LAMF…HFTG) and 116-136 (FHGF…GGII). An NPA 1 motif is present at residues 137–139 (NPA). The next 3 membrane-spanning stretches (helical) occupy residues 156-176 (LVLV…VYLI), 213-233 (TGAI…FLSI), and 245-265 (LFPF…SYSA). The NPA 2 motif lies at 270 to 272 (NPA). The chain crosses the membrane as a helical span at residues 303–323 (WLFPYVGALFGAVMYQIFVGV).

It belongs to the MIP/aquaporin (TC 1.A.8) family.

It is found in the cell membrane. Its function is as follows. Aquaglyceroporin that may modulate the water content and osmolytes during anhydrobiosis. This Milnesium tardigradum (Water bear) protein is Aquaporin-1.